Consider the following 538-residue polypeptide: Non-specific phospholipase C4 (538 aa).

Residues 91–112 (KPWDSGKPDPNPGHPNMSGFAQ) form a disordered region.

It belongs to the bacterial phospholipase C family. Expressed in root tips, cotyledons, on leaf margins, stems, young anthers and funiculus.

Its subcellular location is the cell membrane. The enzyme catalyses a 1,2-diacyl-sn-glycero-3-phosphocholine + H2O = phosphocholine + a 1,2-diacyl-sn-glycerol + H(+). Non-specific phospholipase C (PLC) which assumes major PLC activity during inorganic phosphate starvation. Substrate preference is phosphatidylcholine (PC), but can also hydrolyze phosphatidylethanolamine (PE) with lower efficiency. Has no activity toward phosphatidic acid (PA). Plays an important role in the supply of both inorganic phosphate and diacylglycerol from membrane-localized phospholipids during phosphate deprivation. May be required for lipid-derived signaling molecules that positively modulate abscisic acid (ABA) response and promote plant tolerance to drought and salt stresses. May be involved in brassinolide-mediated signaling in root development. The polypeptide is Non-specific phospholipase C4 (NPC4) (Arabidopsis thaliana (Mouse-ear cress)).